We begin with the raw amino-acid sequence, 175 residues long: Peptide methionine sulfoxide reductase MsrA (175 aa).

The active site involves C10.

It belongs to the MsrA Met sulfoxide reductase family.

The catalysed reaction is L-methionyl-[protein] + [thioredoxin]-disulfide + H2O = L-methionyl-(S)-S-oxide-[protein] + [thioredoxin]-dithiol. It catalyses the reaction [thioredoxin]-disulfide + L-methionine + H2O = L-methionine (S)-S-oxide + [thioredoxin]-dithiol. Has an important function as a repair enzyme for proteins that have been inactivated by oxidation. Catalyzes the reversible oxidation-reduction of methionine sulfoxide in proteins to methionine. This is Peptide methionine sulfoxide reductase MsrA from Clavibacter michiganensis subsp. michiganensis (strain NCPPB 382).